A 345-amino-acid chain; its full sequence is Sulfate/thiosulfate import ATP-binding protein CysA (345 aa).

The ABC transporter domain occupies I3–V237. An ATP-binding site is contributed by G35 to T42.

The protein belongs to the ABC transporter superfamily. Sulfate/tungstate importer (TC 3.A.1.6) family. In terms of assembly, the complex is composed of two ATP-binding proteins (CysA), two transmembrane proteins (CysT and CysW) and a solute-binding protein (CysP).

The protein resides in the cell inner membrane. The enzyme catalyses sulfate(out) + ATP + H2O = sulfate(in) + ADP + phosphate + H(+). It catalyses the reaction thiosulfate(out) + ATP + H2O = thiosulfate(in) + ADP + phosphate + H(+). Functionally, part of the ABC transporter complex CysAWTP involved in sulfate/thiosulfate import. Responsible for energy coupling to the transport system. This chain is Sulfate/thiosulfate import ATP-binding protein CysA, found in Vibrio vulnificus (strain CMCP6).